Consider the following 684-residue polypeptide: Protein LDB19 (684 aa).

Disordered regions lie at residues 462 to 483 (GEAQ…PAGL), 510 to 531 (SAEE…DKRI), and 593 to 632 (SSRV…TSGS). Over residues 593-602 (SSRVVSGPES) the composition is skewed to low complexity.

It belongs to the LDB19 family.

Its subcellular location is the cytoplasm. The protein resides in the golgi apparatus. Its function is as follows. May be involved in protein-linked oligosaccharide phosphorylation. The chain is Protein LDB19 (LDB19) from Eremothecium gossypii (strain ATCC 10895 / CBS 109.51 / FGSC 9923 / NRRL Y-1056) (Yeast).